The sequence spans 548 residues: Membrane protein insertase YidC (548 aa).

The helical transmembrane segment at 6 to 26 (NLLVIALLFVSFMIWQAWEQD) threads the bilayer. Residues 28-56 (NPQPQTQQTTQTTTTAAGSAADQGVPASG) are disordered. Residues 29–42 (PQPQTQQTTQTTTT) show a composition bias toward low complexity. A run of 4 helical transmembrane segments spans residues 350-370 (FVGNWGFSIIIITFIVRGIMY), 424-444 (FPLIIQMPIFLALYYMLMGSI), 458-478 (LSAQDPYYILPILMGVTMFFI), and 499-519 (PVIFTVFFLWFPSGLVLYYIV).

The protein belongs to the OXA1/ALB3/YidC family. Type 1 subfamily. In terms of assembly, interacts with the Sec translocase complex via SecD. Specifically interacts with transmembrane segments of nascent integral membrane proteins during membrane integration.

The protein localises to the cell inner membrane. In terms of biological role, required for the insertion and/or proper folding and/or complex formation of integral membrane proteins into the membrane. Involved in integration of membrane proteins that insert both dependently and independently of the Sec translocase complex, as well as at least some lipoproteins. Aids folding of multispanning membrane proteins. This chain is Membrane protein insertase YidC, found in Salmonella heidelberg (strain SL476).